The sequence spans 799 residues: Cadherin-8 (799 aa).

The first 29 residues, 1–29, serve as a signal peptide directing secretion; that stretch reads MPERLAEMLLDLWTPLIILWITLPPCIYM. Positions 30-61 are excised as a propeptide; it reads APMNQSQVLMSGSPLELNSLGEEQRILNRSKR. 2 N-linked (GlcNAc...) asparagine glycosylation sites follow: N33 and N57. 5 consecutive Cadherin domains span residues 62 to 167, 168 to 276, 277 to 391, 392 to 494, and 495 to 616; these read GWVW…APEF, LNGP…PPKF, AQSL…PPVF, SSPT…DNAP, and EFAS…YVLP. Over 62 to 621 the chain is Extracellular; sequence GWVWNQMFVL…AYVLPIGLSM (560 aa). N-linked (GlcNAc...) asparagine glycosylation is present at N188. 3 N-linked (GlcNAc...) asparagine glycosylation sites follow: N463, N473, and N544. A helical transmembrane segment spans residues 622-642; it reads GALIAILACIILLLVIVVLFV. Residues 643–799 lie on the Cytoplasmic side of the membrane; the sequence is TLRRHKNEPL…YSVGESDKET (157 aa). Phosphoserine is present on S795.

Mainly expressed in brain. Found in certain nerve cell lines, such as retinoblasts, glioma cells and neuroblasts.

Its subcellular location is the cell membrane. Its function is as follows. Cadherins are calcium-dependent cell adhesion proteins. They preferentially interact with themselves in a homophilic manner in connecting cells; cadherins may thus contribute to the sorting of heterogeneous cell types. This Homo sapiens (Human) protein is Cadherin-8 (CDH8).